The primary structure comprises 248 residues: tRNA pseudouridine synthase A (248 aa).

Asp52 functions as the Nucleophile in the catalytic mechanism. A substrate-binding site is contributed by Tyr111.

This sequence belongs to the tRNA pseudouridine synthase TruA family. As to quaternary structure, homodimer.

It carries out the reaction uridine(38/39/40) in tRNA = pseudouridine(38/39/40) in tRNA. Formation of pseudouridine at positions 38, 39 and 40 in the anticodon stem and loop of transfer RNAs. This is tRNA pseudouridine synthase A from Methylocella silvestris (strain DSM 15510 / CIP 108128 / LMG 27833 / NCIMB 13906 / BL2).